A 61-amino-acid polypeptide reads, in one-letter code: Fasciculin-2 (61 aa).

Intrachain disulfides connect cysteine 3/cysteine 22, cysteine 17/cysteine 39, cysteine 41/cysteine 52, and cysteine 53/cysteine 59.

This sequence belongs to the three-finger toxin family. Short-chain subfamily. Acn-esterase inhibitor sub-subfamily. In terms of tissue distribution, expressed by the venom gland.

The protein resides in the secreted. Interferes with neuromuscular transmission by inhibiting the enzyme acetylcholinesterase (AChE) present at the neuromuscular junction. It selectively binds and inhibits with a 1:1 stoichiometry the mammalian and electric fish AChE at picomolar concentrations. It is highly specific for the peripheral site of AChE and blocks the entry of acetylcholine into the active site of the enzyme (through the Met-33 residue), thereby preventing its breakdown. It has been called fasciculin since after injection into mice it causes severe, generalized and long-lasting (5-7 hours) fasciculations. In Dendroaspis angusticeps (Eastern green mamba), this protein is Fasciculin-2.